We begin with the raw amino-acid sequence, 336 residues long: Glycerol-3-phosphate dehydrogenase [NAD(P)+] (336 aa).

The NADPH site is built by Ser11, Trp12, Arg33, Arg34, and Lys107. Sn-glycerol 3-phosphate-binding residues include Lys107 and Gly137. Ala141 serves as a coordination point for NADPH. Residues Lys192, Asp245, Ser255, Arg256, and Asn257 each contribute to the sn-glycerol 3-phosphate site. Lys192 (proton acceptor) is an active-site residue. Residue Arg256 coordinates NADPH. Glu282 contacts NADPH.

Belongs to the NAD-dependent glycerol-3-phosphate dehydrogenase family.

It is found in the cytoplasm. It catalyses the reaction sn-glycerol 3-phosphate + NAD(+) = dihydroxyacetone phosphate + NADH + H(+). It carries out the reaction sn-glycerol 3-phosphate + NADP(+) = dihydroxyacetone phosphate + NADPH + H(+). It functions in the pathway membrane lipid metabolism; glycerophospholipid metabolism. Catalyzes the reduction of the glycolytic intermediate dihydroxyacetone phosphate (DHAP) to sn-glycerol 3-phosphate (G3P), the key precursor for phospholipid synthesis. This Thermobifida fusca (strain YX) protein is Glycerol-3-phosphate dehydrogenase [NAD(P)+].